An 89-amino-acid chain; its full sequence is Thoeris anti-defense 2 (89 aa).

3'cADPR contacts are provided by Trp25 and Asn26. Residue Ser42 coordinates Mg(2+). The 3'cADPR site is built by Trp73 and Asp79.

Homotetramer.

In terms of biological role, counteracts the host Thoeris antiviral defense system. Probably acts by binding and sequestering cyclic ADP-D-ribose signal molecules produced upon viral infection (3'cADPR or 2'cADPR); sequestration prevents the signal from activating the ThsA of the Thoeris antiviral defense system. The sequence is that of Thoeris anti-defense 2 from Bacillus phage SP01 (Bacteriophage SP01).